A 251-amino-acid chain; its full sequence is Keratin-associated protein 10-10 (251 aa).

15 consecutive repeat copies span residues 26 to 30 (CCEPC), 31 to 35 (CCAPA), 52 to 56 (CCQTA), 84 to 88 (CCTSS), 94 to 98 (CCVPV), 99 to 103 (CCVPV), 104 to 109 (CCVPVC), 126 to 130 (CCQQS), 136 to 140 (CCTSS), 146 to 150 (CCVPV), 168 to 172 (CCQQS), 178 to 182 (CCTAS), 183 to 187 (CCRPS), 202 to 206 (CCVPV), and 220 to 224 (CCRTA). The segment at 26-224 (CCEPCCCAPA…SCQPSCCRTA (199 aa)) is 15 X 5 AA repeats of C-C-X(3).

It belongs to the KRTAP type 10 family. In terms of assembly, interacts with hair keratins. In terms of tissue distribution, restricted to a narrow region of the hair fiber cuticle, lying approximately 20 cell layers above the apex of the dermal papilla of the hair root; not detected in any other tissues.

Its function is as follows. In the hair cortex, hair keratin intermediate filaments are embedded in an interfilamentous matrix, consisting of hair keratin-associated proteins (KRTAP), which are essential for the formation of a rigid and resistant hair shaft through their extensive disulfide bond cross-linking with abundant cysteine residues of hair keratins. The matrix proteins include the high-sulfur and high-glycine-tyrosine keratins. The sequence is that of Keratin-associated protein 10-10 (KRTAP10-10) from Homo sapiens (Human).